A 157-amino-acid chain; its full sequence is Transcription elongation factor GreA (157 aa).

The stretch at leucine 14–glutamate 37 forms a coiled coil.

It belongs to the GreA/GreB family.

Its function is as follows. Necessary for efficient RNA polymerase transcription elongation past template-encoded arresting sites. The arresting sites in DNA have the property of trapping a certain fraction of elongating RNA polymerases that pass through, resulting in locked ternary complexes. Cleavage of the nascent transcript by cleavage factors such as GreA or GreB allows the resumption of elongation from the new 3'terminus. GreA releases sequences of 2 to 3 nucleotides. The sequence is that of Transcription elongation factor GreA from Vibrio vulnificus (strain CMCP6).